A 333-amino-acid polypeptide reads, in one-letter code: Glyceraldehyde-3-phosphate dehydrogenase (333 aa).

Residues 11 to 12, Asp-35, Met-79, and Ser-121 each bind NAD(+); that span reads RI. D-glyceraldehyde 3-phosphate-binding positions include 150 to 152, Thr-181, 210 to 211, and Arg-233; these read SCT and TG. The Nucleophile role is filled by Cys-151. Asn-315 provides a ligand contact to NAD(+).

Belongs to the glyceraldehyde-3-phosphate dehydrogenase family. As to quaternary structure, homotetramer.

The protein resides in the cytoplasm. The catalysed reaction is D-glyceraldehyde 3-phosphate + phosphate + NAD(+) = (2R)-3-phospho-glyceroyl phosphate + NADH + H(+). The protein operates within carbohydrate degradation; glycolysis; pyruvate from D-glyceraldehyde 3-phosphate: step 1/5. Its function is as follows. Catalyzes the oxidative phosphorylation of glyceraldehyde 3-phosphate (G3P) to 1,3-bisphosphoglycerate (BPG) using the cofactor NAD. The first reaction step involves the formation of a hemiacetal intermediate between G3P and a cysteine residue, and this hemiacetal intermediate is then oxidized to a thioester, with concomitant reduction of NAD to NADH. The reduced NADH is then exchanged with the second NAD, and the thioester is attacked by a nucleophilic inorganic phosphate to produce BPG. This is Glyceraldehyde-3-phosphate dehydrogenase (gap) from Bacteroides fragilis (strain YCH46).